The chain runs to 137 residues: Probable 4-amino-4-deoxy-L-arabinose-phosphoundecaprenol flippase subunit ArnF (137 aa).

3 helical membrane passes run 43 to 63 (AIAVICASITAYALSMLFWLL), 74 to 94 (YSLLSISYALVYTLAATLPFF), and 98 to 118 (FTVSKTVGVTLIVAGVLTINL).

The protein belongs to the ArnF family. Heterodimer of ArnE and ArnF.

It localises to the cell inner membrane. Its pathway is bacterial outer membrane biogenesis; lipopolysaccharide biosynthesis. Translocates 4-amino-4-deoxy-L-arabinose-phosphoundecaprenol (alpha-L-Ara4N-phosphoundecaprenol) from the cytoplasmic to the periplasmic side of the inner membrane. In Pseudomonas savastanoi pv. phaseolicola (strain 1448A / Race 6) (Pseudomonas syringae pv. phaseolicola (strain 1448A / Race 6)), this protein is Probable 4-amino-4-deoxy-L-arabinose-phosphoundecaprenol flippase subunit ArnF.